The primary structure comprises 122 residues: Large ribosomal subunit protein uL14c (122 aa).

The protein belongs to the universal ribosomal protein uL14 family. In terms of assembly, part of the 50S ribosomal subunit.

The protein localises to the plastid. It localises to the chloroplast. In terms of biological role, binds to 23S rRNA. The polypeptide is Large ribosomal subunit protein uL14c (Chlorokybus atmophyticus (Soil alga)).